A 474-amino-acid chain; its full sequence is Protein U79/U80 (474 aa).

2 stretches are compositionally biased toward basic and acidic residues: residues Asp156–Arg165 and Arg175–Lys219. 2 disordered regions span residues Asp156–Lys219 and Ser412–Gln441. The segment covering Gly417–Asn432 has biased composition (basic residues).

The protein belongs to the herpesviridae U79/UL112 family.

Its subcellular location is the host nucleus. In terms of biological role, may be involved in DNA replication. The protein is Protein U79/U80 (U79/U80) of Homo sapiens (Human).